The sequence spans 199 residues: Dephospho-CoA kinase (199 aa).

Residues 3-199 (ILGLTGSIGM…EVVKMPQRRA (197 aa)) form the DPCK domain. 11–16 (GMGKST) contacts ATP.

The protein belongs to the CoaE family.

Its subcellular location is the cytoplasm. It catalyses the reaction 3'-dephospho-CoA + ATP = ADP + CoA + H(+). Its pathway is cofactor biosynthesis; coenzyme A biosynthesis; CoA from (R)-pantothenate: step 5/5. Its function is as follows. Catalyzes the phosphorylation of the 3'-hydroxyl group of dephosphocoenzyme A to form coenzyme A. The sequence is that of Dephospho-CoA kinase from Bradyrhizobium diazoefficiens (strain JCM 10833 / BCRC 13528 / IAM 13628 / NBRC 14792 / USDA 110).